Reading from the N-terminus, the 469-residue chain is Septin homolog spn1 (469 aa).

The interval 1–58 (MASMVLADGMPTVKDDSTRSRGSDVDSFTSTDNVTQINVEAAISENKNEEKPIQDNSE) is disordered. Residues 13–24 (VKDDSTRSRGSD) are compositionally biased toward basic and acidic residues. The segment covering 26–38 (DSFTSTDNVTQIN) has biased composition (polar residues). The Septin-type G domain maps to 92–367 (QGFNFNVLVL…EAYRTERLLS (276 aa)). Positions 102-109 (GESGSGKS) are G1 motif. Residues 102–109 (GESGSGKS), Thr139, Gly165, 244–252 (KADTLTDDE), and Arg317 each bind GTP. Positions 162 to 165 (DTPG) are G3 motif. The G4 motif stretch occupies residues 243 to 246 (AKAD). A coiled-coil region spans residues 383 to 469 (SAKLEEERAL…NEKSKRKFFK (87 aa)).

Belongs to the TRAFAC class TrmE-Era-EngA-EngB-Septin-like GTPase superfamily. Septin GTPase family. As to quaternary structure, component of the septin complex composed of two copies of each spn1, spn2, spn3 and spn4.

The protein localises to the cytoplasm. It localises to the cell cortex. In terms of biological role, plays a role in the cell cycle. Involved in a late stage of septum formation leading to the separation of the daughter cells. The sequence is that of Septin homolog spn1 (spn1) from Schizosaccharomyces pombe (strain 972 / ATCC 24843) (Fission yeast).